Here is a 686-residue protein sequence, read N- to C-terminus: Translation initiation factor IF-2 (686 aa).

A disordered region spans residues 35–99; the sequence is MSTVEDETAE…EHGQKDTDRR (65 aa). Over residues 50–68 the composition is skewed to basic and acidic residues; it reads LQEEDKPEEKISKKEPDKK. Residues 69 to 79 show a composition bias toward basic residues; the sequence is DRKKTKGKKQM. Positions 87–99 are enriched in basic and acidic residues; sequence EGTEHGQKDTDRR. Residues 186–355 enclose the tr-type G domain; sequence LRPPIVTVMG…LLVAEMEELK (170 aa). The segment at 195–202 is G1; it reads GHVDHGKT. A GTP-binding site is contributed by 195-202; sequence GHVDHGKT. The segment at 220-224 is G2; the sequence is GITQH. The segment at 241-244 is G3; the sequence is DTPG. GTP is bound by residues 241–245 and 295–298; these read DTPGH and NKVD. The segment at 295-298 is G4; the sequence is NKVD. The tract at residues 331–333 is G5; sequence SAL.

This sequence belongs to the TRAFAC class translation factor GTPase superfamily. Classic translation factor GTPase family. IF-2 subfamily.

The protein localises to the cytoplasm. Its function is as follows. One of the essential components for the initiation of protein synthesis. Protects formylmethionyl-tRNA from spontaneous hydrolysis and promotes its binding to the 30S ribosomal subunits. Also involved in the hydrolysis of GTP during the formation of the 70S ribosomal complex. The polypeptide is Translation initiation factor IF-2 (Halothermothrix orenii (strain H 168 / OCM 544 / DSM 9562)).